Here is a 577-residue protein sequence, read N- to C-terminus: Outer spore wall assembly protein SHE10 (577 aa).

The first 23 residues, 1-23, serve as a signal peptide directing secretion; it reads MGKLIKLITTLTVLVSLLQYCCE. 2 coiled-coil regions span residues 379–416 and 513–561; these read NETR…ENVE and ILRS…EEDV. Residues 525-545 are compositionally biased toward basic and acidic residues; that stretch reads RERKERERKEREKAAAEEFQR. The disordered stretch occupies residues 525–577; sequence RERKERERKEREKAAAEEFQRQQELLRQQEEEDEEDVSYTSTSTITTTTTMTL. Low complexity predominate over residues 562 to 577; it reads SYTSTSTITTTTTMTL.

This sequence belongs to the SHE10 family. Component of the mitochondria-localized RNase mitochondrial RNA-processing (RNase MRP) composed of one single RNA encoded by the NME1 gene and at least 31 proteins. Absent in the nucleus-localized RNase MRP (NuMRP).

It localises to the mitochondrion. Its function is as follows. Involved in spore wall assembly. May be a component of the mitochondrial RNase MRP (MtMRP), a ribonucleoprotein endoribonuclease involved in the cleaving RNA transcripts to generate primers for DNA replication in mitochondria. The polypeptide is Outer spore wall assembly protein SHE10 (Saccharomyces cerevisiae (strain Lalvin EC1118 / Prise de mousse) (Baker's yeast)).